The sequence spans 962 residues: Glycine dehydrogenase (decarboxylating) (962 aa).

Position 709 is an N6-(pyridoxal phosphate)lysine (K709).

It belongs to the GcvP family. The glycine cleavage system is composed of four proteins: P, T, L and H. Requires pyridoxal 5'-phosphate as cofactor.

The catalysed reaction is N(6)-[(R)-lipoyl]-L-lysyl-[glycine-cleavage complex H protein] + glycine + H(+) = N(6)-[(R)-S(8)-aminomethyldihydrolipoyl]-L-lysyl-[glycine-cleavage complex H protein] + CO2. Its function is as follows. The glycine cleavage system catalyzes the degradation of glycine. The P protein binds the alpha-amino group of glycine through its pyridoxal phosphate cofactor; CO(2) is released and the remaining methylamine moiety is then transferred to the lipoamide cofactor of the H protein. The chain is Glycine dehydrogenase (decarboxylating) from Shewanella baltica (strain OS195).